A 433-amino-acid chain; its full sequence is Glutamate-1-semialdehyde 2,1-aminomutase (433 aa).

K269 bears the N6-(pyridoxal phosphate)lysine mark.

The protein belongs to the class-III pyridoxal-phosphate-dependent aminotransferase family. HemL subfamily. Homodimer. Requires pyridoxal 5'-phosphate as cofactor.

It is found in the cytoplasm. The enzyme catalyses (S)-4-amino-5-oxopentanoate = 5-aminolevulinate. The protein operates within porphyrin-containing compound metabolism; protoporphyrin-IX biosynthesis; 5-aminolevulinate from L-glutamyl-tRNA(Glu): step 2/2. The protein is Glutamate-1-semialdehyde 2,1-aminomutase of Francisella philomiragia subsp. philomiragia (strain ATCC 25017 / CCUG 19701 / FSC 153 / O#319-036).